The primary structure comprises 410 residues: Alanine racemase (410 aa).

The RPE1 insert domain occupies 28 to 76 (VDFLHNVANKEEFAGNTSPRTAAYTLVREDASLGSTPKLPLGASYAKNL). Lysine 83 functions as the Proton acceptor; specific for D-alanine in the catalytic mechanism. Lysine 83 bears the N6-(pyridoxal phosphate)lysine mark. Arginine 182 is a substrate binding site. Tyrosine 305 functions as the Proton acceptor; specific for L-alanine in the catalytic mechanism. Methionine 353 is a substrate binding site.

The protein belongs to the alanine racemase family. The cofactor is pyridoxal 5'-phosphate.

The catalysed reaction is L-alanine = D-alanine. The protein operates within amino-acid biosynthesis; D-alanine biosynthesis; D-alanine from L-alanine: step 1/1. In terms of biological role, catalyzes the interconversion of L-alanine and D-alanine. May also act on other amino acids. The protein is Alanine racemase (alr) of Rickettsia bellii (strain RML369-C).